We begin with the raw amino-acid sequence, 266 residues long: 5'-nucleotidase SurE (266 aa).

4 residues coordinate a divalent metal cation: Asp8, Asp9, Ser40, and Asn98.

It belongs to the SurE nucleotidase family. It depends on a divalent metal cation as a cofactor.

It is found in the cytoplasm. It carries out the reaction a ribonucleoside 5'-phosphate + H2O = a ribonucleoside + phosphate. Its function is as follows. Nucleotidase that shows phosphatase activity on nucleoside 5'-monophosphates. This chain is 5'-nucleotidase SurE, found in Parasynechococcus marenigrum (strain WH8102).